Here is a 300-residue protein sequence, read N- to C-terminus: Transmembrane protein 158 (300 aa).

The N-terminal stretch at 1–20 (MLPLLAALLAAACPLPPVRG) is a signal peptide. N-linked (GlcNAc...) asparagine glycosylation occurs at asparagine 75. 2 helical membrane-spanning segments follow: residues 231–251 (LVIV…IAGF) and 273–293 (VPAG…AAAV).

Belongs to the TMEM158 family. Post-translationally, N-glycosylated.

It localises to the membrane. In terms of biological role, receptor for brain injury-derived neurotrophic peptide (BINP), a synthetic 13-mer peptide. The sequence is that of Transmembrane protein 158 (TMEM158) from Homo sapiens (Human).